A 145-amino-acid polypeptide reads, in one-letter code: Neuromedin-S (145 aa).

Residues 1-27 form the signal peptide; the sequence is MRSEKHLLPLPLLLAICCLGTLHLSSG. 2 propeptides span residues 28 to 89 and 92 to 117; these read FPQS…HEIY and FLFQ…AEYT. Residue asparagine 136 is modified to Asparagine amide. Residues 140–145 constitute a propeptide that is removed on maturation; that stretch reads VSINEH.

Belongs to the NmU family. As to expression, expressed by the skin glands.

The protein localises to the secreted. Its function is as follows. Stimulates uterine smooth muscle contraction (EC(50)=1.6 nM). Synthetic peptide NmS-17 induces calcium mobilization in CHO cells transfected with either human FM-3/GPR66 (EC(50)=0.085 nM) or FM-4/TGR-1 (EC(50)=0.231 nM) NmU/NmS receptors. The sequence is that of Neuromedin-S (nms) from Bombina maxima (Giant fire-bellied toad).